Reading from the N-terminus, the 117-residue chain is UPF0102 protein FTN_0424 (117 aa).

It belongs to the UPF0102 family.

The polypeptide is UPF0102 protein FTN_0424 (Francisella tularensis subsp. novicida (strain U112)).